The primary structure comprises 352 residues: Histidinol-phosphate aminotransferase (352 aa).

The residue at position 211 (Lys211) is an N6-(pyridoxal phosphate)lysine.

It belongs to the class-II pyridoxal-phosphate-dependent aminotransferase family. Histidinol-phosphate aminotransferase subfamily. Homodimer. The cofactor is pyridoxal 5'-phosphate.

The enzyme catalyses L-histidinol phosphate + 2-oxoglutarate = 3-(imidazol-4-yl)-2-oxopropyl phosphate + L-glutamate. It participates in amino-acid biosynthesis; L-histidine biosynthesis; L-histidine from 5-phospho-alpha-D-ribose 1-diphosphate: step 7/9. The chain is Histidinol-phosphate aminotransferase from Haemophilus influenzae (strain PittGG).